The chain runs to 332 residues: Glycerol-3-phosphate dehydrogenase [NAD(P)+] (332 aa).

Serine 10, tryptophan 11, histidine 31, arginine 32, and lysine 105 together coordinate NADPH. Positions 105, 136, and 138 each coordinate sn-glycerol 3-phosphate. Residue alanine 140 participates in NADPH binding. Sn-glycerol 3-phosphate is bound by residues lysine 191, aspartate 244, serine 254, arginine 255, and asparagine 256. The active-site Proton acceptor is lysine 191. NADPH is bound at residue arginine 255. Positions 279 and 281 each coordinate NADPH.

It belongs to the NAD-dependent glycerol-3-phosphate dehydrogenase family.

Its subcellular location is the cytoplasm. The catalysed reaction is sn-glycerol 3-phosphate + NAD(+) = dihydroxyacetone phosphate + NADH + H(+). It carries out the reaction sn-glycerol 3-phosphate + NADP(+) = dihydroxyacetone phosphate + NADPH + H(+). It functions in the pathway membrane lipid metabolism; glycerophospholipid metabolism. In terms of biological role, catalyzes the reduction of the glycolytic intermediate dihydroxyacetone phosphate (DHAP) to sn-glycerol 3-phosphate (G3P), the key precursor for phospholipid synthesis. The chain is Glycerol-3-phosphate dehydrogenase [NAD(P)+] from Prosthecochloris aestuarii (strain DSM 271 / SK 413).